The following is a 67-amino-acid chain: Small ribosomal subunit protein bS21 (67 aa).

Over residues 37–52 the composition is skewed to basic and acidic residues; the sequence is EKPSERKAREAAEAVR. Residues 37–67 are disordered; that stretch reads EKPSERKAREAAEAVRRARKMERKRLEREGF.

It belongs to the bacterial ribosomal protein bS21 family.

The polypeptide is Small ribosomal subunit protein bS21 (Gluconacetobacter diazotrophicus (strain ATCC 49037 / DSM 5601 / CCUG 37298 / CIP 103539 / LMG 7603 / PAl5)).